Here is a 249-residue protein sequence, read N- to C-terminus: Proteasome subunit alpha type-4 (249 aa).

The protein belongs to the peptidase T1A family. As to quaternary structure, the 26S proteasome consists of a 20S proteasome core and two 19S regulatory subunits. The 20S proteasome core is composed of 28 subunits that are arranged in four stacked rings, resulting in a barrel-shaped structure. The two end rings are each formed by seven alpha subunits, and the two central rings are each formed by seven beta subunits. The catalytic chamber with the active sites is on the inside of the barrel.

It localises to the cytoplasm. The protein resides in the nucleus. In terms of biological role, the proteasome is a multicatalytic proteinase complex which is characterized by its ability to cleave peptides with Arg, Phe, Tyr, Leu, and Glu adjacent to the leaving group at neutral or slightly basic pH. The proteasome has an ATP-dependent proteolytic activity. In Petunia hybrida (Petunia), this protein is Proteasome subunit alpha type-4 (PAC1).